A 323-amino-acid chain; its full sequence is MEDAPAFYGFKNIFLTMFATFFFFKLLIKVFLALLTHFYIVKGNRKEAARIAEEIYGGLSDCWADRSPLHEAAAQGRLLALKTLIAQGINVNLVTINRVSSLHEACLGGHVACAKALLENGAHVNAQTVHGATPLFNACCSGSAACVNVLLEFGAKAQLEIYLASPIHEAVKRGHRECMEILLTKDVNIEQEVPQLGTPLYVACTYQRVDCVKKLLELGASVDHGQWLDTPLHAAVRQSSVEVINLLTVYGANLNLRNAQGKSALDLAVPKSSVRQALLLHEGPPALSQLCRLCVRKCLGRTCHHAIYALGLPESLEKFLLYQ.

ANK repeat units lie at residues 64 to 93, 97 to 126, 130 to 159, 162 to 191, 195 to 224, 227 to 256, and 260 to 289; these read ADRS…NVNL, NRVS…HVNA, HGAT…KAQL, YLAS…NIEQ, QLGT…SVDH, WLDT…NLNL, and QGKS…ALSQ. Residues 273 to 323 enclose the SOCS box domain; the sequence is SVRQALLLHEGPPALSQLCRLCVRKCLGRTCHHAIYALGLPESLEKFLLYQ.

It belongs to the ankyrin SOCS box (ASB) family. In terms of assembly, substrate-recognition component of the ECS(ASB11) complex, composed of ASB11, CUL5, ELOB, ELOC and RNF7/RBX2.

It is found in the endoplasmic reticulum. Its pathway is protein modification; protein ubiquitination. In terms of biological role, substrate-recognition component of a cullin-5-RING E3 ubiquitin-protein ligase complex (ECS complex, also named CRL5 complex), which mediates the ubiquitination and subsequent proteasomal degradation of target proteins, such as BIK, DIRAS2 and RPN1. The ECS(ASB11) complex acts as a regulator of the endoplasmic reticulum unfolded protein response by mediating ubiquitination and degradation of BIK. The protein is Ankyrin repeat and SOCS box protein 11 (Asb11) of Mus musculus (Mouse).